The primary structure comprises 297 residues: Mycothiol acetyltransferase (297 aa).

2 N-acetyltransferase domains span residues 8-153 and 156-297; these read DALD…PPLP and VALR…QYAL. E36 serves as a coordination point for 1D-myo-inositol 2-(L-cysteinylamino)-2-deoxy-alpha-D-glucopyranoside. Residue 80–82 participates in acetyl-CoA binding; that stretch reads LAV. Residues E183, K223, and E231 each contribute to the 1D-myo-inositol 2-(L-cysteinylamino)-2-deoxy-alpha-D-glucopyranoside site. Residues 235–237 and 242–248 contribute to the acetyl-CoA site; these read VGV and QGGGLGK. Residue Y269 coordinates 1D-myo-inositol 2-(L-cysteinylamino)-2-deoxy-alpha-D-glucopyranoside. Residue 274-279 participates in acetyl-CoA binding; that stretch reads NSPAVR.

Belongs to the acetyltransferase family. MshD subfamily. As to quaternary structure, monomer.

It catalyses the reaction 1D-myo-inositol 2-(L-cysteinylamino)-2-deoxy-alpha-D-glucopyranoside + acetyl-CoA = mycothiol + CoA + H(+). Its function is as follows. Catalyzes the transfer of acetyl from acetyl-CoA to desacetylmycothiol (Cys-GlcN-Ins) to form mycothiol. The protein is Mycothiol acetyltransferase of Actinosynnema mirum (strain ATCC 29888 / DSM 43827 / JCM 3225 / NBRC 14064 / NCIMB 13271 / NRRL B-12336 / IMRU 3971 / 101).